Consider the following 418-residue polypeptide: CinA-like protein (418 aa).

This sequence belongs to the CinA family.

This Cytophaga hutchinsonii (strain ATCC 33406 / DSM 1761 / CIP 103989 / NBRC 15051 / NCIMB 9469 / D465) protein is CinA-like protein.